We begin with the raw amino-acid sequence, 133 residues long: Small ribosomal subunit protein bS16 (133 aa).

Residues 83–101 are compositionally biased toward basic and acidic residues; that stretch reads KRDARSNPKKAEPGKKAQE. Residues 83–102 form a disordered region; it reads KRDARSNPKKAEPGKKAQER.

Belongs to the bacterial ribosomal protein bS16 family.

This is Small ribosomal subunit protein bS16 from Mesorhizobium japonicum (strain LMG 29417 / CECT 9101 / MAFF 303099) (Mesorhizobium loti (strain MAFF 303099)).